A 4836-amino-acid polypeptide reads, in one-letter code: E3 ubiquitin-protein ligase HERC2 (4836 aa).

A disordered region spans residues 58 to 90 (LPLRKDDGVDAQSGTKKEDLNDKEKKEEEETPA). Residues 72-85 (TKKEDLNDKEKKEE) show a composition bias toward basic and acidic residues. Residue T273 is modified to Phosphothreonine. One copy of the RCC1 1-1 repeat lies at 416–462 (PTSHKGSLQEVIGWGLIGWKYYANVIGPIQCEGLASLGVMQVACAEK). The RCC1 1-2 repeat unit spans residues 463–513 (RFLILSRNGRVYTQAYNSDMLAPQLVQGLASRNIVKIAAHSDGHHYLALAA). Residues 514-569 (TGEVYSWGCGDGGRLGHGDTVPLEEPKVISAFSGKQAGKHVVHIACGSTYSAAITA) form an RCC1 1-3 repeat. The RCC1 1-4 repeat unit spans residues 570–621 (EGELYTWGRGNYGRLGHGSSEDEAIPMLVAGLKGLKVIDVACGSGDAQTLAV). The stretch at 624–675 (NGQVWSWGDGDYGKLGRGGSDGCKTPKLIEKLQDLDVIKVRCGSQFSIALTK) is one RCC1 1-5 repeat. A Phosphothreonine modification is found at T648. An RCC1 1-6 repeat occupies 676-727 (DGQVYSWGKGDNQRLGHGTEEHVRYPKLLEGLQGKKVIDVAAGSTHCLALTE). An RCC1 1-7 repeat occupies 729 to 779 (SEVHSWGSNDQCQHFDTLRVTKPEPTALPGLDSKHIVGIACGPAQSFAWSS). Positions 948–981 (ALNAAITAEIQDIEAKKEAQKEKEIDEQEASAST) form a coiled coil. A Cytochrome b5 heme-binding domain is found at 1208–1284 (VTLIRKADLE…MHAFCVGQYL (77 aa)). S1578 carries the post-translational modification Phosphoserine. An MIB/HERC2 domain is found at 1860 to 1933 (SGPELAAMMK…KYDLKLVELP (74 aa)). S1943 is subject to Phosphoserine. T1945 bears the Phosphothreonine mark. Residues 2351–2376 (GTGTLQTDDGAAASPDLGDMSPEGPQ) are disordered. The residue at position 2455 (S2455) is a Phosphoserine. Positions 2555-2631 (RADFLSNDDY…RYIHVELIGY (77 aa)) constitute a CPH domain. The ZZ-type zinc-finger motif lies at 2704–2756 (HPGVTCDGCQTFPINGSRFKCRNCDDFDFCETCFKTKKHNTRHTFGRINEPGQ). C2709, C2712, C2724, C2727, C2733, C2736, H2742, and H2746 together coordinate Zn(2+). The DOC domain occupies 2760–2937 (FCGRSGKQLK…ASDNEEEEDD (178 aa)). Residues 2928 to 2947 (ASDNEEEEDDKGSTGSLIRK) form a disordered region. S2929 is subject to Phosphoserine. The RCC1 2-1 repeat unit spans residues 2959 to 3010 (RTKVFVWGLNDKDQLGGLKGSKIKVPSFSETLSALNVVQVAGGSKSLFAVTV). One copy of the RCC1 2-2 repeat lies at 3011 to 3065 (EGKVYSCGEATNGRLGLGMSSGTVPIPRQITALSSYVVKKVAVHSGGRHATALTV). The RCC1 2-3 repeat unit spans residues 3066–3117 (DGKVFSWGEGDDGKLGHFSRMNCDKPRLIEALKTKRIRDIACGSSHSAALTS). The stretch at 3119 to 3169 (GELYTWGLGEYGRLGHGDNTTQLKPKMVKVLLGHRVIQVACGSRDAQTLAL) is one RCC1 2-4 repeat. One copy of the RCC1 2-5 repeat lies at 3172–3223 (EGLVFSWGDGDFGKLGRGGSEGCNIPQNIERLNGQGVCQIECGAQFSLALTK). The stretch at 3225-3275 (GVVWTWGKGDYFRLGHGSDVHVRKPQVVEGLRGKKIVHVAVGALHCLAVTD) is one RCC1 2-6 repeat. Residues 3276–3327 (SGQVYAWGDNDHGQQGNGTTTVNRKPTLVQGLEGQKITRVACGSSHSVAWTT) form an RCC1 2-7 repeat. 3 disordered regions span residues 3479 to 3499 (DAVT…RPFI), 3517 to 3537 (KTKE…QSLD), and 3604 to 3632 (SQSG…SGTV). Over residues 3480–3495 (AVTPSAVTPSAPSASS) the composition is skewed to low complexity. Polar residues-rich tracts occupy residues 3604–3613 (SQSGRLSSQP) and 3620–3631 (HPYTDDTSTSGT). Residues 3953–4004 (SGTIYGWGHNHRGQLGGIEGAKVKVPTPCEALATLRPVQLIGGEQTLFAVTA) form an RCC1 3-1 repeat. The RCC1 3-2 repeat unit spans residues 4006 to 4058 (GKLYATGYGAGGRLGIGGTESVSTPTLLESIQHVFIKKVAVNSGGKHCLALSS). An RCC1 3-3 repeat occupies 4060-4110 (GEVYSWGEAEDGKLGHGNRSPCDRPRVIESLRGIEVVDVAAGGAHSACVTA). An RCC1 3-4 repeat occupies 4112 to 4164 (GDLYTWGKGRYGRLGHSDSEDQLKPKLVEALQGHRVIDIACGSGDAQTLCLTD). The stretch at 4166–4216 (DTVWSWGDGDYGKLGRGGSDGCKVPMKIDSLTGLGVVKVECGSQFSVALTK) is one RCC1 3-5 repeat. The RCC1 3-6 repeat unit spans residues 4218–4268 (GAVYTWGKGDYHRLGHGSDDHVRRPRQVQGLQGKKVIAIATGSLHCVCCTE). The stretch at 4270-4320 (GEVYTWGDNDEGQLGDGTTNAIQRPRLVAALQGKKVNRVACGSAHTLAWST) is one RCC1 3-7 repeat. The region spanning 4459–4796 (DSLLLPHRVW…IHFCKSIDTD (338 aa)) is the HECT domain. The Glycyl thioester intermediate role is filled by C4764. Residues 4806-4836 (EPAADDSSEDSDNEDADSFASDSTQDYLTGH) form a disordered region. Positions 4808-4822 (AADDSSEDSDNEDAD) are enriched in acidic residues. Phosphoserine is present on residues S4812, S4813, and S4816. T4829 is modified (phosphothreonine).

Interacts (when phosphorylated at Thr-4829 and sumoylated) with RNF8 (via FHA domain); this interaction increases after ionising radiation (IR) treatment. Interacts with XPA. Interacts with NEURL4. Via its interaction with NEURL4, may indirectly interact with CCP110 and CEP97. In terms of processing, phosphorylation at Thr-4829 is required for interaction with RNF8. Post-translationally, sumoylated with SUMO1 by PIAS4 in response to double-strand breaks (DSBs), promoting the interaction with RNF8. As to expression, highest levels are found in brain and testis with lower levels in heart, lung, liver, skeletal muscle and kidney. Little expression detected in spleen.

It localises to the cytoplasm. The protein localises to the cytoskeleton. Its subcellular location is the microtubule organizing center. It is found in the centrosome. The protein resides in the centriole. It localises to the nucleus. It carries out the reaction S-ubiquitinyl-[E2 ubiquitin-conjugating enzyme]-L-cysteine + [acceptor protein]-L-lysine = [E2 ubiquitin-conjugating enzyme]-L-cysteine + N(6)-ubiquitinyl-[acceptor protein]-L-lysine.. It functions in the pathway protein modification; protein ubiquitination. In terms of biological role, E3 ubiquitin-protein ligase that regulates ubiquitin-dependent retention of repair proteins on damaged chromosomes. Recruited to sites of DNA damage in response to ionizing radiation (IR) and facilitates the assembly of UBE2N and RNF8 promoting DNA damage-induced formation of 'Lys-63'-linked ubiquitin chains. Acts as a mediator of binding specificity between UBE2N and RNF8. Involved in the maintenance of RNF168 levels. E3 ubiquitin-protein ligase that promotes the ubiquitination and proteasomal degradation of XPA which influences the circadian oscillation of DNA excision repair activity. By controlling the steady-state expression of the IGF1R receptor, indirectly regulates the insulin-like growth factor receptor signaling pathway. Also modulates iron metabolism by regulating the basal turnover of FBXL5. This chain is E3 ubiquitin-protein ligase HERC2, found in Mus musculus (Mouse).